Here is a 244-residue protein sequence, read N- to C-terminus: Probable proteasome subunit alpha type-1 (244 aa).

Belongs to the peptidase T1A family. The 26S proteasome consists of a 20S proteasome core and two 19S regulatory subunits. The 20S proteasome core is composed of 28 subunits that are arranged in four stacked rings, resulting in a barrel-shaped structure. The two end rings are each formed by seven alpha subunits, and the two central rings are each formed by seven beta subunits. The catalytic chamber with the active sites is on the inside of the barrel.

The protein resides in the cytoplasm. The protein localises to the nucleus. The proteasome is a multicatalytic proteinase complex which is characterized by its ability to cleave peptides with Arg, Phe, Tyr, Leu, and Glu adjacent to the leaving group at neutral or slightly basic pH. The proteasome has an ATP-dependent proteolytic activity. The sequence is that of Probable proteasome subunit alpha type-1 from Schizosaccharomyces pombe (strain 972 / ATCC 24843) (Fission yeast).